A 242-amino-acid chain; its full sequence is Glucosamine-6-phosphate deaminase (242 aa).

The active-site Proton acceptor; for enolization step is Asp67. The active-site For ring-opening step is Asn137. His139 acts as the Proton acceptor; for ring-opening step in catalysis. The For ring-opening step role is filled by Glu144.

It belongs to the glucosamine/galactosamine-6-phosphate isomerase family. NagB subfamily.

It carries out the reaction alpha-D-glucosamine 6-phosphate + H2O = beta-D-fructose 6-phosphate + NH4(+). It functions in the pathway amino-sugar metabolism; N-acetylneuraminate degradation; D-fructose 6-phosphate from N-acetylneuraminate: step 5/5. In terms of biological role, catalyzes the reversible isomerization-deamination of glucosamine 6-phosphate (GlcN6P) to form fructose 6-phosphate (Fru6P) and ammonium ion. This chain is Glucosamine-6-phosphate deaminase, found in Staphylococcus haemolyticus (strain JCSC1435).